Consider the following 473-residue polypeptide: MTRRLFGTDGIRGTANTDPMTAEMALKVAMATAAQFRRGSHRHVVVIAKDTRLSGYMLEPALTAGFVSMGMDVVLVGPLPTPAVAMLTRSLRADLGVMVSASHNPFHDNGIKLFGPDGYKLSDEMEAAIEARIAADGAAGGPAADLAGPRDLGRASRLEDAPGRYIEQVKASFPRGLRLDGLKIVVDCANGAAYRVAPKVLWELGAEVVPLAVGPDGFNINRDCGATAPAAMRAAVLEHKAHLGLALDGDADRLILADESGTQIDGDQIMALIGRSWAEDGRLKGGGVVATVMSNLGLELFLRDRGLTLVRTPVGDRYVVEHMREYGFNVGGEQSGHIVLSDFATTGDGLLAALQVLAEIQRTGRPASEVLRVFQPLPQLLRNVRFDPAGGVRPLEAAGVQAAIRAGEARLGGRGRVLIRKSGTEPLIRVMAEGEDEGLVASVVADIVAAVEAATVPRAAGEAATVTQVQPAE.

Catalysis depends on S102, which acts as the Phosphoserine intermediate. Residues S102, D248, D250, and D252 each coordinate Mg(2+). At S102 the chain carries Phosphoserine.

This sequence belongs to the phosphohexose mutase family. Mg(2+) serves as cofactor. Activated by phosphorylation.

It carries out the reaction alpha-D-glucosamine 1-phosphate = D-glucosamine 6-phosphate. Its function is as follows. Catalyzes the conversion of glucosamine-6-phosphate to glucosamine-1-phosphate. This Rhodospirillum centenum (strain ATCC 51521 / SW) protein is Phosphoglucosamine mutase.